The chain runs to 346 residues: Histidinol-phosphate aminotransferase (346 aa).

Lysine 209 is subject to N6-(pyridoxal phosphate)lysine.

It belongs to the class-II pyridoxal-phosphate-dependent aminotransferase family. Histidinol-phosphate aminotransferase subfamily. Homodimer. Requires pyridoxal 5'-phosphate as cofactor.

It catalyses the reaction L-histidinol phosphate + 2-oxoglutarate = 3-(imidazol-4-yl)-2-oxopropyl phosphate + L-glutamate. It participates in amino-acid biosynthesis; L-histidine biosynthesis; L-histidine from 5-phospho-alpha-D-ribose 1-diphosphate: step 7/9. This chain is Histidinol-phosphate aminotransferase, found in Vibrio campbellii (strain ATCC BAA-1116).